A 403-amino-acid chain; its full sequence is Beta-galactoside alpha-2,6-sialyltransferase 1 (403 aa).

Residues 1-9 are Cytoplasmic-facing; sequence MIHTNLKRK. The helical; Signal-anchor for type II membrane protein transmembrane segment at 10-26 threads the bilayer; that stretch reads FSCFVLVFLLFAIICVW. Residues 27–403 are Lumenal-facing; it reads KKGSDYEALT…TLSGFRNNRC (377 aa). Intrachain disulfides connect Cys139–Cys403, Cys181–Cys332, and Cys350–Cys361. Asn146 and Asn158 each carry an N-linked (GlcNAc...) asparagine glycan. Substrate-binding positions include Ser186, Asn209, Asn230, 319–321, Cys350, Tyr351, Thr362, Tyr366, His367, and Lys373; that span reads SSG. Tyr366 bears the Phosphotyrosine mark.

The protein belongs to the glycosyltransferase 29 family. In terms of assembly, monomer and homodimer. Post-translationally, N-glycosylated.

Its subcellular location is the golgi apparatus. The protein localises to the golgi stack membrane. The protein resides in the secreted. It catalyses the reaction a beta-D-galactoside + CMP-N-acetyl-beta-neuraminate = an N-acetyl-alpha-neuraminyl-(2-&gt;6)-beta-D-galactosyl derivative + CMP + H(+). The protein operates within protein modification; protein glycosylation. Its function is as follows. Transfers sialic acid from CMP-sialic acid to galactose-containing acceptor substrates. The protein is Beta-galactoside alpha-2,6-sialyltransferase 1 (St6gal1) of Mus musculus (Mouse).